The sequence spans 194 residues: Fe/S biogenesis protein NfuA (194 aa).

Residues cysteine 151 and cysteine 154 each coordinate [4Fe-4S] cluster.

Belongs to the NfuA family. In terms of assembly, homodimer. Requires [4Fe-4S] cluster as cofactor.

Functionally, involved in iron-sulfur cluster biogenesis. Binds a 4Fe-4S cluster, can transfer this cluster to apoproteins, and thereby intervenes in the maturation of Fe/S proteins. Could also act as a scaffold/chaperone for damaged Fe/S proteins. This is Fe/S biogenesis protein NfuA from Actinobacillus succinogenes (strain ATCC 55618 / DSM 22257 / CCUG 43843 / 130Z).